The chain runs to 767 residues: Cilium assembly protein DZIP1L (767 aa).

Residues 122 to 144 form a disordered region; that stretch reads QQRGQQELGRQADELKGVREESR. Basic and acidic residues predominate over residues 131–144; sequence RQADELKGVREESR. Residues 166–189 form a C2H2-type zinc finger; that stretch reads HTCHLCDKTFMNATFLRGHIQRRH. Positions 205 to 406 form a coiled coil; sequence VEEVLEELRA…SQEEMIQSLS (202 aa). Serine 426 is subject to Phosphoserine. A disordered region spans residues 518 to 767; it reads SRAKERQENG…SSGQPRVPAW (250 aa). Composition is skewed to polar residues over residues 533–547 and 574–588; these read PDGQPSVKSQQSTLV and RQSHGSHGSSLTQVS. Residues 607–616 show a composition bias toward low complexity; the sequence is GPGMSTPPFS. The segment covering 658 to 675 has biased composition (polar residues); sequence ENAQPPGQGSGTLVQSMV. A compositionally biased stretch (basic and acidic residues) spans 677–686; that stretch reads NLEKQLEAPA.

It belongs to the DZIP C2H2-type zinc-finger protein family. Interacts with SEPTIN2.

It is found in the cytoplasm. The protein localises to the cytoskeleton. It localises to the cilium basal body. The protein resides in the microtubule organizing center. Its subcellular location is the centrosome. It is found in the centriole. In terms of biological role, involved in primary cilium formation. Probably acts as a transition zone protein required for localization of PKD1/PC1 and PKD2/PC2 to the ciliary membrane. The protein is Cilium assembly protein DZIP1L of Homo sapiens (Human).